A 391-amino-acid polypeptide reads, in one-letter code: Digeranylgeranylglycerophospholipid reductase (391 aa).

The FAD site is built by glycine 13, glutamate 32, cysteine 43, alanine 44, glycine 46, arginine 97, alanine 121, aspartate 277, glycine 289, and isoleucine 290.

It belongs to the geranylgeranyl reductase family. DGGGPL reductase subfamily. FAD is required as a cofactor.

It carries out the reaction a 2,3-bis-O-phytanyl-sn-glycerol 1-phospholipid + 8 oxidized 2[4Fe-4S]-[ferredoxin] = a 2,3-bis-O-(geranylgeranyl)-sn-glycerol 1-phospholipid + 8 reduced 2[4Fe-4S]-[ferredoxin] + 16 H(+). The enzyme catalyses 2,3-bis-O-(phytanyl)-sn-glycerol 1-phosphate + 8 oxidized 2[4Fe-4S]-[ferredoxin] = 2,3-bis-O-(geranylgeranyl)-sn-glycerol 1-phosphate + 8 reduced 2[4Fe-4S]-[ferredoxin] + 16 H(+). The catalysed reaction is a 2,3-bis-O-phytanyl-sn-glycerol 1-phospholipid + 8 A = a 2,3-bis-O-(geranylgeranyl)-sn-glycerol 1-phospholipid + 8 AH2. It catalyses the reaction CDP-2,3-bis-O-(geranylgeranyl)-sn-glycerol + 8 AH2 = CDP-2,3-bis-O-(phytanyl)-sn-glycerol + 8 A. It carries out the reaction archaetidylserine + 8 AH2 = 2,3-bis-O-phytanyl-sn-glycero-3-phospho-L-serine + 8 A. It functions in the pathway membrane lipid metabolism; glycerophospholipid metabolism. Is involved in the reduction of 2,3-digeranylgeranylglycerophospholipids (unsaturated archaeols) into 2,3-diphytanylglycerophospholipids (saturated archaeols) in the biosynthesis of archaeal membrane lipids. Catalyzes the formation of archaetidic acid (2,3-di-O-phytanyl-sn-glyceryl phosphate) from 2,3-di-O-geranylgeranylglyceryl phosphate (DGGGP) via the hydrogenation of each double bond of the isoprenoid chains. Is also probably able to reduce double bonds of geranyl groups in CDP-2,3-bis-O-(geranylgeranyl)-sn-glycerol and archaetidylserine, thus acting at various stages in the biosynthesis of archaeal membrane lipids. The chain is Digeranylgeranylglycerophospholipid reductase from Methanothrix thermoacetophila (strain DSM 6194 / JCM 14653 / NBRC 101360 / PT) (Methanosaeta thermophila).